A 269-amino-acid chain; its full sequence is 5'-nucleotidase SurE (269 aa).

A divalent metal cation is bound by residues aspartate 8, aspartate 9, serine 40, and asparagine 95.

Belongs to the SurE nucleotidase family. Requires a divalent metal cation as cofactor.

It localises to the cytoplasm. The catalysed reaction is a ribonucleoside 5'-phosphate + H2O = a ribonucleoside + phosphate. Nucleotidase that shows phosphatase activity on nucleoside 5'-monophosphates. The polypeptide is 5'-nucleotidase SurE (Nitratidesulfovibrio vulgaris (strain DSM 19637 / Miyazaki F) (Desulfovibrio vulgaris)).